A 429-amino-acid chain; its full sequence is Adenylosuccinate synthetase (429 aa).

GTP contacts are provided by residues 12 to 18 and 40 to 42; these read GDEGKGK and GHT. D13 acts as the Proton acceptor in catalysis. Mg(2+) contacts are provided by D13 and G40. Residues 13–16, 38–41, T128, R142, Q223, T238, and R302 each bind IMP; these read DEGK and NAGH. H41 acts as the Proton donor in catalysis. Residue 298-304 coordinates substrate; sequence TVTKRPR. GTP is bound by residues R304, 330–332, and 412–414; these read CLD and SVG.

It belongs to the adenylosuccinate synthetase family. As to quaternary structure, homodimer. It depends on Mg(2+) as a cofactor.

It localises to the cytoplasm. It carries out the reaction IMP + L-aspartate + GTP = N(6)-(1,2-dicarboxyethyl)-AMP + GDP + phosphate + 2 H(+). It functions in the pathway purine metabolism; AMP biosynthesis via de novo pathway; AMP from IMP: step 1/2. Functionally, plays an important role in the de novo pathway of purine nucleotide biosynthesis. Catalyzes the first committed step in the biosynthesis of AMP from IMP. This Lactiplantibacillus plantarum (strain ATCC BAA-793 / NCIMB 8826 / WCFS1) (Lactobacillus plantarum) protein is Adenylosuccinate synthetase.